The chain runs to 207 residues: Putative 3-methyladenine DNA glycosylase (207 aa).

The protein belongs to the DNA glycosylase MPG family.

This is Putative 3-methyladenine DNA glycosylase from Koribacter versatilis (strain Ellin345).